The following is a 224-amino-acid chain: Charged multivesicular body protein 4c (224 aa).

Disordered regions lie at residues 1-21 (MSVF…PTPQ) and 182-224 (SGPE…AWAM). Positions 7-17 (LFGGGGKGGKG) are enriched in gly residues. Residues 21-221 (QEAIQKLRET…DEDDMEELKA (201 aa)) adopt a coiled-coil conformation.

This sequence belongs to the SNF7 family. Probable core component of the endosomal sorting required for transport complex III (ESCRT-III). ESCRT-III components are thought to multimerize to form a flat lattice on the perimeter membrane of the endosome.

Its subcellular location is the cytoplasm. It localises to the cytosol. The protein resides in the late endosome membrane. Probable core component of the endosomal sorting required for transport complex III (ESCRT-III) which is involved in multivesicular bodies (MVBs) formation and sorting of endosomal cargo proteins into MVBs. MVBs contain intraluminal vesicles (ILVs) that are generated by invagination and scission from the limiting membrane of the endosome and mostly are delivered to lysosomes enabling degradation of membrane proteins, such as stimulated growth factor receptors, lysosomal enzymes and lipids. Key component of the cytokinesis checkpoint, a process required to delay abscission to prevent both premature resolution of intercellular chromosome bridges and accumulation of DNA damage. In Danio rerio (Zebrafish), this protein is Charged multivesicular body protein 4c (chmp4c).